Reading from the N-terminus, the 331-residue chain is Putative ankyrin repeat protein RBE_0261 (331 aa).

The ANK repeat unit spans residues 94 to 159 (QGENVIHKCV…KAKNTLLNIV (66 aa)).

This is Putative ankyrin repeat protein RBE_0261 from Rickettsia bellii (strain RML369-C).